The primary structure comprises 139 residues: Holo-[acyl-carrier-protein] synthase (139 aa).

2 residues coordinate Mg(2+): Asp9 and Glu63.

It belongs to the P-Pant transferase superfamily. AcpS family. Mg(2+) is required as a cofactor.

The protein resides in the cytoplasm. It catalyses the reaction apo-[ACP] + CoA = holo-[ACP] + adenosine 3',5'-bisphosphate + H(+). Functionally, transfers the 4'-phosphopantetheine moiety from coenzyme A to a Ser of acyl-carrier-protein. This chain is Holo-[acyl-carrier-protein] synthase, found in Wigglesworthia glossinidia brevipalpis.